Consider the following 622-residue polypeptide: Low affinity potassium transport system protein Kup (622 aa).

The next 12 helical transmembrane spans lie at 9–29 (LSAV…TSPL), 46–66 (PDVV…VVSV), 101–121 (ILVV…VITP), 137–157 (PALD…LFVI), 165–185 (VGKL…LLGL), 213–233 (VSFF…ALYA), 247–267 (WFTV…ALLL), 276–296 (PFFL…ATLA), 337–357 (IYIP…IIGF), 363–383 (LAAA…ILFC), 395–415 (FLVA…FSAN), and 416–436 (VLKL…MFII).

It belongs to the HAK/KUP transporter (TC 2.A.72) family.

The protein resides in the cell inner membrane. The enzyme catalyses K(+)(in) + H(+)(in) = K(+)(out) + H(+)(out). Its function is as follows. Responsible for the low-affinity transport of potassium into the cell. Likely operates as a K(+):H(+) symporter. In Yersinia pseudotuberculosis serotype O:1b (strain IP 31758), this protein is Low affinity potassium transport system protein Kup.